The following is a 212-amino-acid chain: Eukaryotic translation initiation factor 4E-4 (212 aa).

Cys143 and Cys147 form a disulfide bridge.

It belongs to the eukaryotic initiation factor 4E family. As to quaternary structure, eIF4F is a multi-subunit complex, the composition of which varies with external and internal environmental conditions. It is composed of at least eIF4A, eIF4E and eIF4G. eIF4E is also known to interact with other partners. As to expression, enriched in somatic cells.

In terms of biological role, recognizes and binds the 7-methylguanosine-containing mRNA cap during an early step in the initiation of protein synthesis and facilitates ribosome binding by inducing the unwinding of the mRNAs secondary structures. All 5 eIF4E proteins bind monomethyl cap structures. Only ife-1, ife-2 and ife-5 bind trimethyl cap structures which result from trans-splicing. Translation of trimethyl cap structure mRNAs may be regulated by intracellular redox state; disulfide bonds change the width and depth of the cap-binding cavity determining selectivity to mRNA caps. The protein is Eukaryotic translation initiation factor 4E-4 (ife-4) of Caenorhabditis elegans.